The chain runs to 261 residues: Cytochrome c oxidase subunit 3 (261 aa).

Residues 1–15 (MTHQTHAYHMVNPSP) are Mitochondrial matrix-facing. A helical transmembrane segment spans residues 16–34 (WPLTGALSALLMTSGLIMW). The Mitochondrial intermembrane segment spans residues 35–40 (FHFNST). Residues 41–66 (TLLMLGLTTNMLTMYQWWRDIIREST) traverse the membrane as a helical segment. Topologically, residues 67-72 (FQGHHT) are mitochondrial matrix. A helical membrane pass occupies residues 73 to 105 (PNVQKGLRYGMILFIISEVLFFTGFFWAFYHSS). Topologically, residues 106 to 128 (LAPTPELGGCWPPTGIHPLNPLE) are mitochondrial intermembrane. Residues 129-152 (VPLLNTSVLLASGVSITWAHHSLM) form a helical membrane-spanning segment. Over 153 to 155 (EGN) the chain is Mitochondrial matrix. The chain crosses the membrane as a helical span at residues 156 to 183 (RNHMLQALFITIALGVYFTLLQASEYYE). Over 184–190 (APFTISD) the chain is Mitochondrial intermembrane. A helical transmembrane segment spans residues 191-223 (GVYGSTFFVATGFHGLHVIIGSTFLIVCFFRQL). Over 224–232 (KFHFTSSHH) the chain is Mitochondrial matrix. A helical membrane pass occupies residues 233–256 (FGFEAAAWYWHFVDVVWLFLYVSI). Over 257-261 (YWWGS) the chain is Mitochondrial intermembrane.

This sequence belongs to the cytochrome c oxidase subunit 3 family. In terms of assembly, component of the cytochrome c oxidase (complex IV, CIV), a multisubunit enzyme composed of 14 subunits. The complex is composed of a catalytic core of 3 subunits MT-CO1, MT-CO2 and MT-CO3, encoded in the mitochondrial DNA, and 11 supernumerary subunits COX4I, COX5A, COX5B, COX6A, COX6B, COX6C, COX7A, COX7B, COX7C, COX8 and NDUFA4, which are encoded in the nuclear genome. The complex exists as a monomer or a dimer and forms supercomplexes (SCs) in the inner mitochondrial membrane with NADH-ubiquinone oxidoreductase (complex I, CI) and ubiquinol-cytochrome c oxidoreductase (cytochrome b-c1 complex, complex III, CIII), resulting in different assemblies (supercomplex SCI(1)III(2)IV(1) and megacomplex MCI(2)III(2)IV(2)).

The protein resides in the mitochondrion inner membrane. It catalyses the reaction 4 Fe(II)-[cytochrome c] + O2 + 8 H(+)(in) = 4 Fe(III)-[cytochrome c] + 2 H2O + 4 H(+)(out). Functionally, component of the cytochrome c oxidase, the last enzyme in the mitochondrial electron transport chain which drives oxidative phosphorylation. The respiratory chain contains 3 multisubunit complexes succinate dehydrogenase (complex II, CII), ubiquinol-cytochrome c oxidoreductase (cytochrome b-c1 complex, complex III, CIII) and cytochrome c oxidase (complex IV, CIV), that cooperate to transfer electrons derived from NADH and succinate to molecular oxygen, creating an electrochemical gradient over the inner membrane that drives transmembrane transport and the ATP synthase. Cytochrome c oxidase is the component of the respiratory chain that catalyzes the reduction of oxygen to water. Electrons originating from reduced cytochrome c in the intermembrane space (IMS) are transferred via the dinuclear copper A center (CU(A)) of subunit 2 and heme A of subunit 1 to the active site in subunit 1, a binuclear center (BNC) formed by heme A3 and copper B (CU(B)). The BNC reduces molecular oxygen to 2 water molecules using 4 electrons from cytochrome c in the IMS and 4 protons from the mitochondrial matrix. This chain is Cytochrome c oxidase subunit 3 (MT-CO3), found in Litocranius walleri (Gerenuk).